The sequence spans 422 residues: UDP-N-acetylglucosamine 1-carboxyvinyltransferase (422 aa).

Residue 22 to 23 coordinates phosphoenolpyruvate; that stretch reads KN. Position 92 (R92) interacts with UDP-N-acetyl-alpha-D-glucosamine. Residue C116 is the Proton donor of the active site. 2-(S-cysteinyl)pyruvic acid O-phosphothioketal is present on C116. UDP-N-acetyl-alpha-D-glucosamine is bound by residues 121-125, D307, and L329; that span reads RPIDL.

Belongs to the EPSP synthase family. MurA subfamily.

It is found in the cytoplasm. It carries out the reaction phosphoenolpyruvate + UDP-N-acetyl-alpha-D-glucosamine = UDP-N-acetyl-3-O-(1-carboxyvinyl)-alpha-D-glucosamine + phosphate. The protein operates within cell wall biogenesis; peptidoglycan biosynthesis. Functionally, cell wall formation. Adds enolpyruvyl to UDP-N-acetylglucosamine. The sequence is that of UDP-N-acetylglucosamine 1-carboxyvinyltransferase from Sulfurovum sp. (strain NBC37-1).